Consider the following 393-residue polypeptide: Riboflavin biosynthesis protein RibBA (393 aa).

Positions 1 to 200 (MQFDTIELAI…IKSLVAFRKA (200 aa)) are DHBP synthase. Residues 27 to 28 (RE), Asp32, 139 to 143 (RNGHT), and Glu163 each bind D-ribulose 5-phosphate. Residue Glu28 participates in Mg(2+) binding. Residue His142 coordinates Mg(2+). The tract at residues 201–393 (VELNVNLKAK…TKKNKMGHLI (193 aa)) is GTP cyclohydrolase II. 249–253 (RMHSA) contributes to the GTP binding site. Positions 254, 265, and 267 each coordinate Zn(2+). GTP-binding positions include Gln270, 291–293 (EGR), and Thr313. The Proton acceptor; for GTP cyclohydrolase activity role is filled by Asp325. Arg327 functions as the Nucleophile; for GTP cyclohydrolase activity in the catalytic mechanism. 2 residues coordinate GTP: Ser348 and Lys353.

This sequence in the N-terminal section; belongs to the DHBP synthase family. The protein in the C-terminal section; belongs to the GTP cyclohydrolase II family. Requires Mg(2+) as cofactor. Mn(2+) serves as cofactor. The cofactor is Zn(2+).

The enzyme catalyses D-ribulose 5-phosphate = (2S)-2-hydroxy-3-oxobutyl phosphate + formate + H(+). It carries out the reaction GTP + 4 H2O = 2,5-diamino-6-hydroxy-4-(5-phosphoribosylamino)-pyrimidine + formate + 2 phosphate + 3 H(+). It functions in the pathway cofactor biosynthesis; riboflavin biosynthesis; 2-hydroxy-3-oxobutyl phosphate from D-ribulose 5-phosphate: step 1/1. Its pathway is cofactor biosynthesis; riboflavin biosynthesis; 5-amino-6-(D-ribitylamino)uracil from GTP: step 1/4. In terms of biological role, catalyzes the conversion of D-ribulose 5-phosphate to formate and 3,4-dihydroxy-2-butanone 4-phosphate. Its function is as follows. Catalyzes the conversion of GTP to 2,5-diamino-6-ribosylamino-4(3H)-pyrimidinone 5'-phosphate (DARP), formate and pyrophosphate. The sequence is that of Riboflavin biosynthesis protein RibBA from Staphylococcus epidermidis (strain ATCC 12228 / FDA PCI 1200).